Consider the following 373-residue polypeptide: MKLFFRFVTLVAVLAMSLANVAPAWALTSRIKDIASLQAGRDNQLIGYGLIVGLQGTGDGFRASPFTEQSMRAMLQNLGISTQGGQSNAKNTAAVMVTANLPPFASPGSRIDVTVSSLGDATSLRGGTLVMTSLSGADGQIYAVAQGAVIVSGFQAQGQAATVTEGVTTAGRVPGGAIIERELPSRFKDSVNLVLQLRNPDFSTAIRIADIVNGYASARFGGPVAEAKDSQEVVIQKPRAADLTRLMADVENLIVETDTPAKVVINERTGTIVIGSDVRVSPVAVSYGTLTVQVTETPQIIQPEPFSRGRTAVQPQTDIAAEQTGGRVAIIDGPDLRTLVAGLNNIGVKPDGIIAILQGIKSAGALQAELVLQ.

The signal sequence occupies residues 1 to 26 (MKLFFRFVTLVAVLAMSLANVAPAWA).

The protein belongs to the FlgI family. The basal body constitutes a major portion of the flagellar organelle and consists of four rings (L,P,S, and M) mounted on a central rod.

It is found in the periplasm. The protein resides in the bacterial flagellum basal body. Its function is as follows. Assembles around the rod to form the L-ring and probably protects the motor/basal body from shearing forces during rotation. The polypeptide is Flagellar P-ring protein (Rhizobium johnstonii (strain DSM 114642 / LMG 32736 / 3841) (Rhizobium leguminosarum bv. viciae)).